A 267-amino-acid polypeptide reads, in one-letter code: Neuferricin (267 aa).

The signal sequence occupies residues 1–17 (MLKYLVALISMVLAVWT). One can recognise a Cytochrome b5 heme-binding domain in the interval 53 to 150 (LLTKEQLSLY…RDYTPVGKLI (98 aa)).

It belongs to the cytochrome b5 family. MAPR subfamily.

The protein resides in the secreted. Heme-binding protein which promotes neuronal but not astrocyte differentiation. The sequence is that of Neuferricin (cyb5d2) from Danio rerio (Zebrafish).